A 511-amino-acid chain; its full sequence is UDP-N-acetylmuramoyl-L-alanyl-D-glutamate--2,6-diaminopimelate ligase (511 aa).

S30 is a binding site for UDP-N-acetyl-alpha-D-muramoyl-L-alanyl-D-glutamate. Position 110–116 (110–116 (GTNGKTT)) interacts with ATP. UDP-N-acetyl-alpha-D-muramoyl-L-alanyl-D-glutamate is bound by residues 152 to 153 (TT), S179, Q185, and R187. At K219 the chain carries N6-carboxylysine. Meso-2,6-diaminopimelate-binding positions include R385, 409–412 (DNPR), G476, and E480. Residues 409–412 (DNPR) carry the Meso-diaminopimelate recognition motif motif.

The protein belongs to the MurCDEF family. MurE subfamily. It depends on Mg(2+) as a cofactor. Carboxylation is probably crucial for Mg(2+) binding and, consequently, for the gamma-phosphate positioning of ATP.

The protein resides in the cytoplasm. It carries out the reaction UDP-N-acetyl-alpha-D-muramoyl-L-alanyl-D-glutamate + meso-2,6-diaminopimelate + ATP = UDP-N-acetyl-alpha-D-muramoyl-L-alanyl-gamma-D-glutamyl-meso-2,6-diaminopimelate + ADP + phosphate + H(+). It functions in the pathway cell wall biogenesis; peptidoglycan biosynthesis. Its function is as follows. Catalyzes the addition of meso-diaminopimelic acid to the nucleotide precursor UDP-N-acetylmuramoyl-L-alanyl-D-glutamate (UMAG) in the biosynthesis of bacterial cell-wall peptidoglycan. In Geobacter metallireducens (strain ATCC 53774 / DSM 7210 / GS-15), this protein is UDP-N-acetylmuramoyl-L-alanyl-D-glutamate--2,6-diaminopimelate ligase.